The following is a 172-amino-acid chain: 3-hydroxydecanoyl-[acyl-carrier-protein] dehydratase (172 aa).

His71 is a catalytic residue.

The protein belongs to the thioester dehydratase family. FabA subfamily. As to quaternary structure, homodimer.

The protein localises to the cytoplasm. It carries out the reaction a (3R)-hydroxyacyl-[ACP] = a (2E)-enoyl-[ACP] + H2O. It catalyses the reaction (3R)-hydroxydecanoyl-[ACP] = (2E)-decenoyl-[ACP] + H2O. The catalysed reaction is (2E)-decenoyl-[ACP] = (3Z)-decenoyl-[ACP]. It participates in lipid metabolism; fatty acid biosynthesis. Functionally, necessary for the introduction of cis unsaturation into fatty acids. Catalyzes the dehydration of (3R)-3-hydroxydecanoyl-ACP to E-(2)-decenoyl-ACP and then its isomerization to Z-(3)-decenoyl-ACP. Can catalyze the dehydratase reaction for beta-hydroxyacyl-ACPs with saturated chain lengths up to 16:0, being most active on intermediate chain length. This is 3-hydroxydecanoyl-[acyl-carrier-protein] dehydratase from Blochmanniella floridana.